The primary structure comprises 328 residues: Fructosamine deglycase FrlB (328 aa).

2 consecutive SIS domains span residues 15-153 (FLQD…VLEN) and 181-311 (NAKQ…ELAE).

Homooctamer.

Catalyzes the conversion of a range of fructosamine 6-phosphates to glucose 6-phosphate and a free amino acid. The protein is Fructosamine deglycase FrlB (frlB) of Bacillus subtilis (strain 168).